The chain runs to 265 residues: Thiazole synthase (265 aa).

Lys-106 (schiff-base intermediate with DXP) is an active-site residue. 1-deoxy-D-xylulose 5-phosphate-binding positions include Gly-167, 193–194 (AG), and 215–216 (NT). The disordered stretch occupies residues 245–265 (GRIPRRARAEPSSPQLGLVGS).

It belongs to the ThiG family. Homotetramer. Forms heterodimers with either ThiH or ThiS.

The protein localises to the cytoplasm. The enzyme catalyses [ThiS sulfur-carrier protein]-C-terminal-Gly-aminoethanethioate + 2-iminoacetate + 1-deoxy-D-xylulose 5-phosphate = [ThiS sulfur-carrier protein]-C-terminal Gly-Gly + 2-[(2R,5Z)-2-carboxy-4-methylthiazol-5(2H)-ylidene]ethyl phosphate + 2 H2O + H(+). Its pathway is cofactor biosynthesis; thiamine diphosphate biosynthesis. Catalyzes the rearrangement of 1-deoxy-D-xylulose 5-phosphate (DXP) to produce the thiazole phosphate moiety of thiamine. Sulfur is provided by the thiocarboxylate moiety of the carrier protein ThiS. In vitro, sulfur can be provided by H(2)S. This Methylobacterium sp. (strain 4-46) protein is Thiazole synthase.